Reading from the N-terminus, the 310-residue chain is UPF0761 membrane protein VF_0100 (310 aa).

Helical transmembrane passes span 34–54 (YMAY…LSVL), 97–117 (MTAV…SSID), 136–156 (FSLY…SLAA), 178–198 (LLGW…YLLV), 207–227 (HALI…VGFA), and 242–262 (ALAA…IVLI).

Belongs to the UPF0761 family.

Its subcellular location is the cell inner membrane. This is UPF0761 membrane protein VF_0100 from Aliivibrio fischeri (strain ATCC 700601 / ES114) (Vibrio fischeri).